The primary structure comprises 364 residues: DNA replication and repair protein RecF (364 aa).

30-37 is a binding site for ATP; it reads GANGSGKT.

Belongs to the RecF family.

It localises to the cytoplasm. Functionally, the RecF protein is involved in DNA metabolism; it is required for DNA replication and normal SOS inducibility. RecF binds preferentially to single-stranded, linear DNA. It also seems to bind ATP. The chain is DNA replication and repair protein RecF from Sodalis glossinidius.